A 65-amino-acid polypeptide reads, in one-letter code: Large ribosomal subunit protein bL35 (65 aa).

This sequence belongs to the bacterial ribosomal protein bL35 family.

The sequence is that of Large ribosomal subunit protein bL35 from Prochlorococcus marinus (strain MIT 9301).